Reading from the N-terminus, the 289-residue chain is MIGPIVVLHLICAVGFSIFMLQYYNILYDKPACNHMGGCEMQDIYKVTENSTEDENGTLTTTTIKPVKTPACPVKECRGDEFCCKLCSEVKGNDYSERPIHMESTLYIHNPAIITIAIVGVVIGVFIIVCIANICRMKSGKRGTTFVRFLIGITLFLLFLTLAGSVAFIVISIISDFDYYKDCHAKLTLNISWGFVCGILAISYSTSILPSFTRIMRAEQLKRDALDIPDHDESTQMLIKADRLKHEPIEKPGLFSTIARYLLTLCLLWWPAITIYFIGVGQGRWLPIV.

Transmembrane regions (helical) follow at residues 1–21 (MIGP…IFML), 112–132 (AIIT…VCIA), 151–171 (IGIT…FIVI), 189–209 (LNIS…TSIL), and 261–281 (YLLT…IGVG).

The protein resides in the host membrane. The chain is Putative transmembrane protein ORF111 from Ostreid herpesvirus 1 (isolate France) (OsHV-1).